A 213-amino-acid chain; its full sequence is Negative modulator of initiation of replication (213 aa).

Interaction with DNA stretches follow at residues 116–117, 145–149, and 179–185; these read AV, RTRVY, and NTNSGRK.

The protein belongs to the SeqA family. As to quaternary structure, homodimer. Polymerizes to form helical filaments.

It localises to the cytoplasm. Functionally, negative regulator of replication initiation, which contributes to regulation of DNA replication and ensures that replication initiation occurs exactly once per chromosome per cell cycle. Binds to pairs of hemimethylated GATC sequences in the oriC region, thus preventing assembly of replication proteins and re-initiation at newly replicated origins. Repression is relieved when the region becomes fully methylated. This chain is Negative modulator of initiation of replication, found in Haemophilus parainfluenzae (strain T3T1).